The primary structure comprises 752 residues: MIDGVEESDAPLSPKSPFARRNGRSLRIQRLVDCQHFHYTTVELGPVKVVIIAINTDENATERIKMRVESESNSWLVERSREDWAVFDRQLHRCVFERRHSRLDELFPLIHLESAKFEEVLVKYTERLSELTGSIITCYPVLKFLEIDSRGGHFEPAEETSINVPAIAAAVVTKDFEPTDNSQLRLRVGDIVSITEMSTASPNEQTFWKAKLTISNQKIVDPQNGHLGFEIGYFPRDCVMLIDDKRLPNPLNTEPKPAPRNARRYMTTMFRNRRREPIFGLELTELFMRTGKRVPVIVERCCAAIEDQGIVTGIYRQCGIQSNIQRLRAKFDSGAEPDLHEFGQRDIYSVSSLLKQYFRQLPNPLFTYQAYPALIETFEKEESVEEKVESLRFLLEAMPEHLSRLCKSKSLTDMTSKNLAIVWSPNLFRPPPTLNGADAHLLSGLNVHTAICDFCIENSDSLFICDIDEEQSKCTSIENSFTTISKSATMSDMRSESDSRWPRFFRGKSVEGFWKFNRKQQTSTGELCGSPPSEVKWRSRSTRSHSTDATFQSSRADSFMQLMHTGMDQIREGMRIFRARARSMRPTSRPPPSPRTRRARFSNGGGANNVQRVNERERDIQIELPLATAESSITPEPRSTMDSNNIMTRTVSVNDSDDASFEENGLKEIRERKVMFKAATQEHVAPIHERSSPVEEWSSDSRESLHLEMSRYDNVSPSGTITRSQREPISNLSPAAQLLFFESSRASQLFSA.

Positions 165-244 (PAIAAAVVTK…PRDCVMLIDD (80 aa)) constitute an SH3 domain. In terms of domain architecture, Rho-GAP spans 281 to 463 (LELTELFMRT…FCIENSDSLF (183 aa)). Disordered regions lie at residues 523 to 552 (STGE…ATFQ) and 582 to 609 (RSMR…GANN).

Functionally, functions as a GTPase-activating protein (GAP) for ced-10/RAC-1 and CDC42. The chain is GTPase-activating protein rrc-1 from Caenorhabditis briggsae.